We begin with the raw amino-acid sequence, 190 residues long: Interferon alpha-9 (190 aa).

The signal sequence occupies residues 1–23; sequence MARPFAFLMVLVVISYWSTCSLG. 2 disulfide bridges follow: cysteine 24-cysteine 122 and cysteine 52-cysteine 162. A glycan (N-linked (GlcNAc...) asparagine) is linked at asparagine 101.

This sequence belongs to the alpha/beta interferon family.

It is found in the secreted. Produced by macrophages, IFN-alpha have antiviral activities. Interferon stimulates the production of two enzymes: a protein kinase and an oligoadenylate synthetase. This Mus musculus (Mouse) protein is Interferon alpha-9 (Ifna9).